Consider the following 348-residue polypeptide: Aspartate carbamoyltransferase catalytic subunit (348 aa).

Carbamoyl phosphate is bound by residues R59 and T60. K87 contributes to the L-aspartate binding site. R109, H142, and Q145 together coordinate carbamoyl phosphate. R182 and R253 together coordinate L-aspartate. Positions 294 and 295 each coordinate carbamoyl phosphate.

The protein belongs to the aspartate/ornithine carbamoyltransferase superfamily. ATCase family. In terms of assembly, heterododecamer (2C3:3R2) of six catalytic PyrB chains organized as two trimers (C3), and six regulatory PyrI chains organized as three dimers (R2).

The catalysed reaction is carbamoyl phosphate + L-aspartate = N-carbamoyl-L-aspartate + phosphate + H(+). It functions in the pathway pyrimidine metabolism; UMP biosynthesis via de novo pathway; (S)-dihydroorotate from bicarbonate: step 2/3. In terms of biological role, catalyzes the condensation of carbamoyl phosphate and aspartate to form carbamoyl aspartate and inorganic phosphate, the committed step in the de novo pyrimidine nucleotide biosynthesis pathway. This is Aspartate carbamoyltransferase catalytic subunit from Prochlorococcus marinus (strain MIT 9303).